The sequence spans 87 residues: U3-theraphotoxin-Hhn1l (87 aa).

A signal peptide spans 1 to 24 (MVNMKASMFLTFAGLVLLFVVCYA). The propeptide occupies 25 to 52 (SESEEKEFPKEMLSSIFAVDNDFKQEER). Intrachain disulfides connect Cys-54/Cys-67, Cys-61/Cys-72, and Cys-66/Cys-79.

It belongs to the neurotoxin 10 (Hwtx-1) family. 51 (Hntx-8) subfamily. Hntx-8 sub-subfamily. Expressed by the venom gland.

The protein resides in the secreted. Ion channel inhibitor. This Cyriopagopus hainanus (Chinese bird spider) protein is U3-theraphotoxin-Hhn1l.